The chain runs to 242 residues: Transcriptional activator protein RaiR (242 aa).

An HTH luxR-type domain is found at 177–242 (KVADLPRLSR…EQLLGPRRSN (66 aa)). A DNA-binding region (H-T-H motif) is located at residues 201–220 (AKQICARLSISVSAVQLYLA).

The protein belongs to the autoinducer-regulated transcriptional regulatory protein family.

This is Transcriptional activator protein RaiR (raiR) from Rhizobium etli.